Consider the following 329-residue polypeptide: G-protein coupled bile acid receptor 1 (329 aa).

The Extracellular segment spans residues 1–19 (MTSNSTREVPSPVPAGALG). N-linked (GlcNAc...) asparagine glycosylation is present at Asn-4. A helical membrane pass occupies residues 20–40 (LSLALASLIVAANLLLAVGIA). Residues 41–52 (GDRRLRSPPAGC) lie on the Cytoplasmic side of the membrane. Residues 53–73 (FFLSLLLAGLLTGLALPALPV) form a helical membrane-spanning segment. At 74-85 (LWSQSRRGYWSC) the chain is on the extracellular side. A disulfide bridge connects residues Cys-85 and Cys-155. Residues 86 to 106 (LFLYLAPNFCFLSLLANLLLV) form a helical membrane-spanning segment. At 107–125 (HGERYMAVLRPLRPRGSMR) the chain is on the cytoplasmic side. Residues 126-146 (LALLLTWAAPLLFASLPALGW) form a helical membrane-spanning segment. Residues 147-165 (NHWAPGGNCSSQAVFPAPY) are Extracellular-facing. Residue Asn-154 is glycosylated (N-linked (GlcNAc...) asparagine). A helical transmembrane segment spans residues 166–186 (LYLEIYGLLLPAVGAAALLSV). The Cytoplasmic portion of the chain corresponds to 187–230 (RVLVTAHRQLQDIRRLERAVCRGAPSALARALTWRQARAQAGAT). Residues 231 to 251 (LLFGLCWGPYVATLLLSVLAF) form a helical membrane-spanning segment. Residues 252–261 (EQRPPLGPGT) are Extracellular-facing. The helical transmembrane segment at 262 to 282 (LLSLISLGSASAAAVPVAMGL) threads the bilayer. Over 283-329 (GDQRYTGPWRVAAQKWLRMLRGRPQSSPGPSTAYHTSSQSSVDLDLN) the chain is Cytoplasmic. Residues 304-329 (GRPQSSPGPSTAYHTSSQSSVDLDLN) form a disordered region. The segment covering 306 to 329 (PQSSPGPSTAYHTSSQSSVDLDLN) has biased composition (polar residues).

The protein belongs to the G-protein coupled receptor 1 family.

The protein localises to the cell membrane. Receptor for bile acid. Bile acid-binding induces its internalization, activation of extracellular signal-regulated kinase and intracellular cAMP production. May be involved in the suppression of macrophage functions by bile acids. Involved in bile acid promoted GLP1R secretion. This is G-protein coupled bile acid receptor 1 (GPBAR1) from Bos taurus (Bovine).